Here is a 498-residue protein sequence, read N- to C-terminus: ATP synthase subunit beta, chloroplastic (498 aa).

ATP is bound at residue 172–179 (GGAGVGKT).

This sequence belongs to the ATPase alpha/beta chains family. In terms of assembly, F-type ATPases have 2 components, CF(1) - the catalytic core - and CF(0) - the membrane proton channel. CF(1) has five subunits: alpha(3), beta(3), gamma(1), delta(1), epsilon(1). CF(0) has four main subunits: a(1), b(1), b'(1) and c(9-12).

It localises to the plastid. It is found in the chloroplast thylakoid membrane. The catalysed reaction is ATP + H2O + 4 H(+)(in) = ADP + phosphate + 5 H(+)(out). Its function is as follows. Produces ATP from ADP in the presence of a proton gradient across the membrane. The catalytic sites are hosted primarily by the beta subunits. The polypeptide is ATP synthase subunit beta, chloroplastic (Phaseolus vulgaris (Kidney bean)).